The chain runs to 232 residues: MLSGDIPPNQTVYLRNLNEKVKKEELKRSLYALCSQYGRILDVVALKTPKLRGQAWVVFSEITAATNAFRGLQEFDFYGKRMRVQYAKTKSDCLATEDGSTAPKEKRKKQEEKAAEKKRRAEEAQQSGPNAAAQSNGTGYQASRLGKTSQEPPAPPNNILFIQNLPAETTSMMLQILFQQYPGFREVRMIEAKPGIAFVEYEDDSQSMVAMQALQGFKITPYNPMAISYAKK.

The 80-residue stretch at 10–89 folds into the RRM 1 domain; it reads QTVYLRNLNE…KRMRVQYAKT (80 aa). The segment at 92–159 is disordered; the sequence is DCLATEDGST…QEPPAPPNNI (68 aa). Over residues 108–123 the composition is skewed to basic and acidic residues; it reads KKQEEKAAEKKRRAEE. The span at 127–151 shows a compositional bias: polar residues; it reads SGPNAAAQSNGTGYQASRLGKTSQE. The 75-residue stretch at 158 to 232 folds into the RRM 2 domain; the sequence is NILFIQNLPA…NPMAISYAKK (75 aa).

Belongs to the RRM U1 A/B'' family. As to quaternary structure, component of the spliceosome where it is associated with snRNP U2.

The protein localises to the nucleus. The protein resides in the cajal body. It is found in the nucleoplasm. It localises to the cytoplasm. In terms of biological role, involved in nuclear pre-mRNA splicing. This is U2 small nuclear ribonucleoprotein B'' from Oryza sativa subsp. indica (Rice).